A 94-amino-acid chain; its full sequence is Putative pterin-4-alpha-carbinolamine dehydratase (94 aa).

It belongs to the pterin-4-alpha-carbinolamine dehydratase family.

It catalyses the reaction (4aS,6R)-4a-hydroxy-L-erythro-5,6,7,8-tetrahydrobiopterin = (6R)-L-erythro-6,7-dihydrobiopterin + H2O. The polypeptide is Putative pterin-4-alpha-carbinolamine dehydratase (Chloroflexus aggregans (strain MD-66 / DSM 9485)).